A 141-amino-acid polypeptide reads, in one-letter code: Large ribosomal subunit protein uL11 (141 aa).

The protein belongs to the universal ribosomal protein uL11 family. Part of the ribosomal stalk of the 50S ribosomal subunit. Interacts with L10 and the large rRNA to form the base of the stalk. L10 forms an elongated spine to which L12 dimers bind in a sequential fashion forming a multimeric L10(L12)X complex. Post-translationally, one or more lysine residues are methylated.

In terms of biological role, forms part of the ribosomal stalk which helps the ribosome interact with GTP-bound translation factors. This is Large ribosomal subunit protein uL11 from Microcystis aeruginosa (strain NIES-843 / IAM M-2473).